The chain runs to 122 residues: S-adenosylmethionine decarboxylase proenzyme (122 aa).

Serine 69 serves as the catalytic Schiff-base intermediate with substrate; via pyruvic acid. At serine 69 the chain carries Pyruvic acid (Ser); by autocatalysis. The Proton acceptor; for processing activity role is filled by histidine 74. Catalysis depends on cysteine 89, which acts as the Proton donor; for catalytic activity.

Belongs to the prokaryotic AdoMetDC family. Type 1 subfamily. Heterotetramer of two alpha and two beta chains arranged as a dimer of alpha/beta heterodimers. It depends on pyruvate as a cofactor. In terms of processing, is synthesized initially as an inactive proenzyme. Formation of the active enzyme involves a self-maturation process in which the active site pyruvoyl group is generated from an internal serine residue via an autocatalytic post-translational modification. Two non-identical subunits are generated from the proenzyme in this reaction, and the pyruvate is formed at the N-terminus of the alpha chain, which is derived from the carboxyl end of the proenzyme. The post-translation cleavage follows an unusual pathway, termed non-hydrolytic serinolysis, in which the side chain hydroxyl group of the serine supplies its oxygen atom to form the C-terminus of the beta chain, while the remainder of the serine residue undergoes an oxidative deamination to produce ammonia and the pyruvoyl group blocking the N-terminus of the alpha chain.

It carries out the reaction S-adenosyl-L-methionine + H(+) = S-adenosyl 3-(methylsulfanyl)propylamine + CO2. It functions in the pathway amine and polyamine biosynthesis; S-adenosylmethioninamine biosynthesis; S-adenosylmethioninamine from S-adenosyl-L-methionine: step 1/1. Functionally, catalyzes the decarboxylation of S-adenosylmethionine to S-adenosylmethioninamine (dcAdoMet), the propylamine donor required for the synthesis of the polyamines spermine and spermidine from the diamine putrescine. In Sulfurisphaera tokodaii (strain DSM 16993 / JCM 10545 / NBRC 100140 / 7) (Sulfolobus tokodaii), this protein is S-adenosylmethionine decarboxylase proenzyme.